The primary structure comprises 348 residues: MGKDYYKILGIPSGANEDEIKKAYRKMALKYHPDKNKEPNAEEKFKEIAEAYDVLSDPKKRGLYDQYGEEGLKTGGGTSGGSSGSFHYTFHGDPHATFASFFGGSNPFDIFFASSRSTRPFSGFDPDDMDVDEDEDPFGAFGRFGFNGLSRGPRRAPEPLYPRRKVQDPPVVHELRVSLEEIYHGSTKRMKITRRRLNPDGRTVRTEDKILHIVIKRGWKEGTKITFPKEGDATPDNIPADIVFVLKDKPHAHFRRDGTNVLYSALISLKEALCGCTVNIPTIDGRVIPLPCNDVIKPGTVKRLRGEGLPFPKVPTQRGDLIVEFKVRFPDRLTPQTRQILKQHLPCS.

The region spanning 4 to 68 (DYYKILGIPS…KKRGLYDQYG (65 aa)) is the J domain.

This chain is DnaJ homolog subfamily B member 5 (DNAJB5), found in Homo sapiens (Human).